A 2860-amino-acid polypeptide reads, in one-letter code: Methylcytosine dioxygenase TET (2860 aa).

Disordered regions lie at residues 51-255 (HYTT…PHLQ) and 457-562 (GQPH…DAVS). Basic residues predominate over residues 57–70 (HHPHSHSHPHHHYQ). Low complexity-rich tracts occupy residues 71–181 (QHYP…AASG) and 191–231 (ANAN…SNGS). A compositionally biased stretch (polar residues) spans 468 to 482 (TPTSYDGNNSNNSYP). Composition is skewed to low complexity over residues 492 to 508 (HTPH…TTTP) and 536 to 546 (SLESSAESEAS). Residues 591–631 (SKKKRKRCGECVGCQRKDNCGECAPCRNDKSHQICKQRRCE) form a CXXC-type zinc finger. 8 residues coordinate Zn(2+): cysteine 598, cysteine 601, cysteine 604, cysteine 610, cysteine 613, cysteine 616, cysteine 625, and cysteine 630. 7 disordered regions span residues 641 to 734 (GADG…NLQQ), 771 to 810 (QHFQ…DQPQ), 920 to 1113 (QVSA…EGYA), 1130 to 1155 (RKSD…QQTG), 1170 to 1195 (LSAN…QQVQ), 1209 to 1356 (AVGG…HSQY), and 1437 to 1460 (GYQH…IHGH). Residues 692-706 (TKANKLNAAAASATS) are compositionally biased toward low complexity. Positions 718–732 (LPQQSPNTTSATGNL) are enriched in polar residues. 3 stretches are compositionally biased toward low complexity: residues 771 to 804 (QHFQ…QIQT), 930 to 942 (QQQQ…QQQQ), and 985 to 1021 (ATNS…GTTT). Polar residues predominate over residues 1040-1054 (PNQAVPQSPTRSNML). Residues 1076-1085 (QQQQQQQQQQ) are compositionally biased toward low complexity. Residues 1086–1097 (HLSSPPMQDWNW) show a composition bias toward polar residues. Over residues 1141 to 1153 (LQQQPQQVQQQQQ) the composition is skewed to low complexity. Low complexity-rich tracts occupy residues 1248-1263 (QDAQ…QPGQ) and 1299-1312 (SRAA…AEAA). The segment covering 1337–1349 (PPHPHAAGGPPPG) has biased composition (pro residues). Zn(2+) is bound by residues cysteine 1638, cysteine 1640, cysteine 1699, histidine 1725, and cysteine 1727. The interaction with wds stretch occupies residues 1657 to 2666 (LGTASSLMDL…RMTLIFYQHR (1010 aa)). Arginine 1767 is a 2-oxoglutarate binding site. The Zn(2+) site is built by cysteine 1777, cysteine 1779, cysteine 1795, cysteine 1804, and cysteine 1862. A 2-oxoglutarate-binding site is contributed by cysteine 1878. Histidine 1884 is a binding site for Zn(2+). Residues histidine 1886 and aspartate 1888 each contribute to the Fe cation site. A substrate-binding site is contributed by asparagine 1891. Histidine 1919 provides a ligand contact to 2-oxoglutarate. Disordered stretches follow at residues 1966 to 2115 (PCRR…LMSS), 2198 to 2229 (LTPS…PTGA), 2263 to 2334 (SNLT…NLTE), 2350 to 2371 (APLT…PPSD), 2422 to 2444 (MYPQ…MYGH), and 2536 to 2598 (LPDL…NSTK). Acidic residues predominate over residues 1979 to 1989 (EAAPPDGDQDA). Low complexity-rich tracts occupy residues 1993 to 2015 (ANSQ…QQSS) and 2029 to 2059 (GNGV…STPG). Residues 2069–2086 (RCQTPVTNNPSPAGSAFS) are compositionally biased toward polar residues. Over residues 2212-2229 (PPATSIAGGTTTGAPTGA) the composition is skewed to low complexity. Polar residues predominate over residues 2263–2275 (SNLTNPGGVTTEV). The segment covering 2276–2285 (QQQHQQAQQQ) has biased composition (low complexity). Residues 2290–2304 (GGVGPGGLPVVGGAP) show a composition bias toward gly residues. Pro residues predominate over residues 2426 to 2437 (QTPPPTPPPPSP). The segment covering 2540 to 2562 (SNGQTNSDTVATPTPTGDSSSND) has biased composition (polar residues). Low complexity predominate over residues 2570 to 2594 (AGNQAPASGAGAATTAPPIASPGST). Position 2642 (histidine 2642) interacts with Fe cation. Residue 2657–2659 (RMT) coordinates 2-oxoglutarate. 2663–2665 (YQH) contacts substrate. Histidine 2673 contacts Zn(2+). Residues 2729–2860 (KESSANGQQL…HQQLPQQQQT (132 aa)) form a disordered region. The segment covering 2732-2742 (SANGQQLKNGA) has biased composition (polar residues). The span at 2750-2768 (SSDSKKSQANEQSKNEKVA) shows a compositional bias: basic and acidic residues. Low complexity-rich tracts occupy residues 2772–2785 (PTLT…LFPT) and 2798–2821 (NSSP…QQQH). A compositionally biased stretch (pro residues) spans 2822 to 2849 (LPPPPGSGLIHPPPGTPTGTAAPPPLPT). Low complexity predominate over residues 2850–2860 (PHQQLPQQQQT).

The protein belongs to the TET family. As to quaternary structure, interacts (via C-terminus) with wds (via WD repeats). Fe(2+) is required as a cofactor. Requires Zn(2+) as cofactor. As to expression, expressed in brain (at protein level).

It is found in the chromosome. It carries out the reaction an N(6)-methyl-2'-deoxyadenosine in DNA + 2-oxoglutarate + O2 = a 2'-deoxyadenosine in DNA + formaldehyde + succinate + CO2. The enzyme catalyses a 5-methyl-2'-deoxycytidine in DNA + 2-oxoglutarate + O2 = a 5-hydroxymethyl-2'-deoxycytidine in DNA + succinate + CO2. The catalysed reaction is a 5-hydroxymethyl-2'-deoxycytidine in DNA + 2-oxoglutarate + O2 = a 5-formyl-2'-deoxycytidine in DNA + succinate + CO2 + H2O. It catalyses the reaction a 5-formyl-2'-deoxycytidine in DNA + 2-oxoglutarate + O2 = a 5-carboxyl-2'-deoxycytidine in DNA + succinate + CO2 + H(+). Dioxygenase that specifically demethylates DNA methylated on the 6th position of adenine (N(6)-methyladenosine) DNA. N(6)-methyladenosine (m6A) DNA is present at a relatively high level at the very earliest embryonic stages but at low levels at the late embryonic stages and may act as a regulator of gene expression. Promotes differentiation of early germ cells in ovary. Contributes to neuronal morphology, development, and function in the brain. By interacting with histone modifier wds, binds to a specific set of genes, modulates intragenic (N(6)-methyladenosine) DNA levels and thereby maintains transcriptional activation. Also able to catalyze the conversion of the modified genomic base 5-methylcytosine (5mC) into 5-hydroxymethylcytosine (5hmC). This is Methylcytosine dioxygenase TET from Drosophila melanogaster (Fruit fly).